Consider the following 534-residue polypeptide: MKTKFIFVTGGVVSSIGKGLAAASLGALLEARGLRVTHQKLDPYINVDPGTMSPFQHGEVFVTDDGAETDLDLGHYERYTSARLSKKSNFTTGQVYFSVIEKERRGDYLGGTVQVIPHITDEIKSKILDNAKGSDIAIIEIGGTVGDIESLPFLEAIRQFKADRGAGNVLYLHVTLVPFIKTADELKTKPTQHSVKELREIGIQPDILLCRCEQDLPREMKAKIALFCNVEEKAVITSMDAEHIYAVPLALHKEGLDEQVVEKLNIWAKAPDLTPWQQVVDKLMHPGHGKVRIAIVGKYVNLTESYKSLAEALTHGGIANDCRVHLSYLDSEKIEQEGIDGLLDGVDGILVPGGFGERGTEGKIKAIEYARTRKIPFFGICLGMQMAVVEYARNVCHLDDAFSSEFKQDCANPIIHLMEEQKGVSRKGGTMRLGAYPCTLAKGSFAQKAYGTLDISERHRHRYEFNNDYRDLLVSNGLILSGIYKEGDLVEIVEIPDHPWFVGCQFHPEFKSKPLNPHPLFRAFIAAALHNIKA.

Residues 1 to 266 (MKTKFIFVTG…DEQVVEKLNI (266 aa)) are amidoligase domain. Ser-14 serves as a coordination point for CTP. Ser-14 serves as a coordination point for UTP. ATP is bound by residues 15–20 (SIGKGL) and Asp-72. Mg(2+)-binding residues include Asp-72 and Glu-140. Residues 147 to 149 (DIE), 187 to 192 (KTKPTQ), and Lys-223 each bind CTP. UTP contacts are provided by residues 187-192 (KTKPTQ) and Lys-223. The 243-residue stretch at 292–534 (RIAIVGKYVN…IAAALHNIKA (243 aa)) folds into the Glutamine amidotransferase type-1 domain. Gly-354 contacts L-glutamine. Residue Cys-381 is the Nucleophile; for glutamine hydrolysis of the active site. L-glutamine-binding positions include 382-385 (LGMQ), Glu-405, and Arg-462. Residues His-507 and Glu-509 contribute to the active site.

It belongs to the CTP synthase family. Homotetramer.

The enzyme catalyses UTP + L-glutamine + ATP + H2O = CTP + L-glutamate + ADP + phosphate + 2 H(+). It catalyses the reaction L-glutamine + H2O = L-glutamate + NH4(+). It carries out the reaction UTP + NH4(+) + ATP = CTP + ADP + phosphate + 2 H(+). It functions in the pathway pyrimidine metabolism; CTP biosynthesis via de novo pathway; CTP from UDP: step 2/2. Its activity is regulated as follows. Allosterically activated by GTP, when glutamine is the substrate; GTP has no effect on the reaction when ammonia is the substrate. The allosteric effector GTP functions by stabilizing the protein conformation that binds the tetrahedral intermediate(s) formed during glutamine hydrolysis. Inhibited by the product CTP, via allosteric rather than competitive inhibition. Functionally, catalyzes the ATP-dependent amination of UTP to CTP with either L-glutamine or ammonia as the source of nitrogen. Regulates intracellular CTP levels through interactions with the four ribonucleotide triphosphates. The sequence is that of CTP synthase from Geotalea uraniireducens (strain Rf4) (Geobacter uraniireducens).